A 285-amino-acid chain; its full sequence is Pantothenate synthetase (285 aa).

30-37 contributes to the ATP binding site; that stretch reads MGNLHRGH. The active-site Proton donor is the His-37. Gln-61 lines the (R)-pantoate pocket. Gln-61 is a binding site for beta-alanine. Residue 149 to 152 coordinates ATP; the sequence is GRKD. Gln-155 serves as a coordination point for (R)-pantoate. ATP-binding positions include Val-178 and 186-189; that span reads LSSR.

This sequence belongs to the pantothenate synthetase family. In terms of assembly, homodimer.

It localises to the cytoplasm. It catalyses the reaction (R)-pantoate + beta-alanine + ATP = (R)-pantothenate + AMP + diphosphate + H(+). It functions in the pathway cofactor biosynthesis; (R)-pantothenate biosynthesis; (R)-pantothenate from (R)-pantoate and beta-alanine: step 1/1. Catalyzes the condensation of pantoate with beta-alanine in an ATP-dependent reaction via a pantoyl-adenylate intermediate. The polypeptide is Pantothenate synthetase (Halorhodospira halophila (strain DSM 244 / SL1) (Ectothiorhodospira halophila (strain DSM 244 / SL1))).